The chain runs to 578 residues: MAFMEKPPAGKVLLDDTVPLTAAIEASQSLQSHTEYIIRVQRGISVENSWQIVRRYSDFDLLNNSLQIAGLSLPLPPKKLIGNMDREFIAERQKGLQNYLNVITTNHILSNCELVKKFLDPNNYSANYTEIALQQVSMFFRSEPKWEVVEPLKDIGWRIRKKYFLMKIKNQPKERLVLSWADLGPDKYLSDKDFQCLIKLLPSCLHPYIYRVTFATANESSALLIRMFNEKGTLKDLIYKAKPKDPFLKKYCNPKKIQGLELQQIKTYGRQILEVLKFLHDKGFPYGHLHASNVMLDGDTCRLLDLENSLLGLPSFYRSYFSQFRKINTLESVDVHCFGHLLYEMTYGRPPDSVPVDSFPPAPSMAVVAVLESTLSCEACKNGMPTISRLLQMPLFSDVLLTTSEKPQFKIPTKLKEALRIAKECIEKRLIEEQKQIHQHRRLTRAQSHHGSEEERKKRKILARKKSKRSALENSEEHSAKYSNSNNSAGSGASSPLTSPSSPTPPSTSGISALPPPPPPPPPPAAPLPPASTEAPAQLSSQAVNGMSRGALLSSIQNFQKGTLRKAKTCDHSAPKIG.

One can recognise a PX domain in the interval 14 to 126; it reads LDDTVPLTAA…KFLDPNNYSA (113 aa). In terms of domain architecture, Protein kinase spans 88 to 481; it reads FIAERQKGLQ…LENSEEHSAK (394 aa). 2 stretches are compositionally biased toward basic residues: residues 437-448 and 457-469; these read IHQHRRLTRAQS and KKRKILARKKSKR. Disordered stretches follow at residues 437-548 and 559-578; these read IHQH…NGMS and FQKGTLRKAKTCDHSAPKIG. A compositionally biased stretch (low complexity) spans 483 to 513; the sequence is SNSNNSAGSGASSPLTSPSSPTPPSTSGISA. Positions 514–530 are enriched in pro residues; it reads LPPPPPPPPPPAAPLPP. Residues 548–567 form the WH2 domain; that stretch reads SRGALLSSIQNFQKGTLRKA. Residues 568-578 show a composition bias toward basic and acidic residues; the sequence is KTCDHSAPKIG.

It belongs to the protein kinase superfamily. As to expression, widely expressed in all tissues examined except in heart. Isoform 1 is expressed in high levels in the brain, skeletal muscle, spleen and testis. Isoform 7 expression has yet to be demonstrated.

The protein localises to the cytoplasm. The protein resides in the cell membrane. In terms of biological role, binds to and modulates brain Na,K-ATPase subunits ATP1B1 and ATP1B3 and may thereby participate in the regulation of electrical excitability and synaptic transmission. May not display kinase activity. The polypeptide is PX domain-containing protein kinase-like protein (Homo sapiens (Human)).